The sequence spans 955 residues: Vacuolar membrane protease (955 aa).

Over methionine 1–arginine 16 the chain is Cytoplasmic. A helical membrane pass occupies residues tryptophan 17 to valine 37. Residues histidine 38–threonine 390 are Vacuolar-facing. Residues asparagine 53 and asparagine 119 are each glycosylated (N-linked (GlcNAc...) asparagine). Zn(2+) contacts are provided by histidine 174 and aspartate 186. The Proton acceptor role is filled by glutamate 220. Residues glutamate 221, glutamate 246, and histidine 319 each contribute to the Zn(2+) site. The helical transmembrane segment at leucine 391–isoleucine 411 threads the bilayer. Residues alanine 412–glycine 442 lie on the Cytoplasmic side of the membrane. A helical transmembrane segment spans residues phenylalanine 443–leucine 463. The Vacuolar segment spans residues valine 464–histidine 473. A helical membrane pass occupies residues serine 474–valine 494. The Cytoplasmic segment spans residues serine 495–arginine 508. Residues isoleucine 509 to tyrosine 529 traverse the membrane as a helical segment. Over alanine 530–arginine 533 the chain is Vacuolar. The helical transmembrane segment at glycine 534 to isoleucine 554 threads the bilayer. Residues serine 555–tryptophan 656 lie on the Cytoplasmic side of the membrane. Residues serine 574–serine 590 show a composition bias toward low complexity. Residues serine 574 to serine 611 are disordered. Residues glycine 591–threonine 603 are compositionally biased toward acidic residues. Residues valine 657–leucine 677 form a helical membrane-spanning segment. Residues threonine 678 to leucine 693 are Vacuolar-facing. Residues phenylalanine 694 to isoleucine 714 traverse the membrane as a helical segment. The Cytoplasmic portion of the chain corresponds to histidine 715–valine 721. A helical membrane pass occupies residues proline 722–phenylalanine 742. The Vacuolar segment spans residues serine 743–aspartate 955. Asparagine 826 carries an N-linked (GlcNAc...) asparagine glycan.

This sequence belongs to the peptidase M28 family. Zn(2+) is required as a cofactor.

The protein resides in the vacuole membrane. May be involved in vacuolar sorting and osmoregulation. This is Vacuolar membrane protease from Aspergillus oryzae (strain ATCC 42149 / RIB 40) (Yellow koji mold).